The chain runs to 692 residues: Protein arginine N-methyltransferase 7 (692 aa).

SAM-dependent MTase PRMT-type domains are found at residues 14 to 345 (SLEW…YCVW) and 358 to 684 (SAYQ…ITME). Arg32 is modified (omega-N-methylarginine). Catalysis depends on residues Glu144 and Glu153.

Belongs to the class I-like SAM-binding methyltransferase superfamily. Protein arginine N-methyltransferase family. PRMT7 subfamily. Homodimer and heterodimer. Interacts with PRMT5 and SNRPD3. Interacts with CTCFL.

The protein localises to the cytoplasm. The protein resides in the cytosol. It localises to the nucleus. It catalyses the reaction L-arginyl-[protein] + S-adenosyl-L-methionine = N(omega)-methyl-L-arginyl-[protein] + S-adenosyl-L-homocysteine + H(+). Arginine methyltransferase that can both catalyze the formation of omega-N monomethylarginine (MMA) and symmetrical dimethylarginine (sDMA), with a preference for the formation of MMA. Specifically mediates the symmetrical dimethylation of arginine residues in the small nuclear ribonucleoproteins Sm D1 (SNRPD1) and Sm D3 (SNRPD3); such methylation being required for the assembly and biogenesis of snRNP core particles. Specifically mediates the symmetric dimethylation of histone H4 'Arg-3' to form H4R3me2s. Plays a role in gene imprinting by being recruited by CTCFL at the H19 imprinted control region (ICR) and methylating histone H4 to form H4R3me2s, possibly leading to recruit DNA methyltransferases at these sites. May also play a role in embryonic stem cell (ESC) pluripotency. Also able to mediate the arginine methylation of histone H2A and myelin basic protein (MBP) in vitro; the relevance of such results is however unclear in vivo. This is Protein arginine N-methyltransferase 7 (Prmt7) from Mus musculus (Mouse).